Here is a 219-residue protein sequence, read N- to C-terminus: Cytidylate kinase (219 aa).

9-17 (GPAGSGKTT) provides a ligand contact to ATP.

This sequence belongs to the cytidylate kinase family. Type 1 subfamily.

The protein localises to the cytoplasm. The enzyme catalyses CMP + ATP = CDP + ADP. It catalyses the reaction dCMP + ATP = dCDP + ADP. In Fervidobacterium nodosum (strain ATCC 35602 / DSM 5306 / Rt17-B1), this protein is Cytidylate kinase.